The sequence spans 414 residues: Putative dipeptidase TRV_05564 (414 aa).

The first 20 residues, 1–20, serve as a signal peptide directing secretion; that stretch reads MAALFVSLLALTSLVPVQGA. Residues H45, D47, and E157 each contribute to the Zn(2+) site. C96 and C186 are joined by a disulfide. Residue H184 participates in substrate binding. Residues H228 and H249 each coordinate Zn(2+). Positions 260 and 320 each coordinate substrate. Residue N392 is glycosylated (N-linked (GlcNAc...) asparagine).

Belongs to the metallo-dependent hydrolases superfamily. Peptidase M19 family. The cofactor is Zn(2+).

It catalyses the reaction an L-aminoacyl-L-amino acid + H2O = 2 an L-alpha-amino acid. Hydrolyzes a wide range of dipeptides. The sequence is that of Putative dipeptidase TRV_05564 from Trichophyton verrucosum (strain HKI 0517).